Here is a 108-residue protein sequence, read N- to C-terminus: Thioredoxin (108 aa).

One can recognise a Thioredoxin domain in the interval 2-108 (NKIIELTDQN…LKEFLDENIN (107 aa)). Cys-32 and Cys-35 form a disulfide bridge.

Belongs to the thioredoxin family.

In terms of biological role, participates in various redox reactions through the reversible oxidation of its active center dithiol to a disulfide and catalyzes dithiol-disulfide exchange reactions. The polypeptide is Thioredoxin (trxA) (Buchnera aphidicola subsp. Acyrthosiphon pisum (strain APS) (Acyrthosiphon pisum symbiotic bacterium)).